Reading from the N-terminus, the 252-residue chain is Ribosome assembly factor mrt4 (252 aa).

It belongs to the universal ribosomal protein uL10 family. In terms of assembly, associates with the pre-60S ribosomal particle.

It is found in the nucleus. Its subcellular location is the nucleolus. It localises to the cytoplasm. In terms of biological role, component of the ribosome assembly machinery. Nuclear paralog of the ribosomal protein P0, it binds pre-60S subunits at an early stage of assembly in the nucleolus, and is replaced by P0 in cytoplasmic pre-60S subunits and mature 80S ribosomes. This is Ribosome assembly factor mrt4 from Neurospora crassa (strain ATCC 24698 / 74-OR23-1A / CBS 708.71 / DSM 1257 / FGSC 987).